The sequence spans 617 residues: tRNA-dihydrouridine(47) synthase [NAD(P)(+)] (617 aa).

The C3H1-type zinc-finger motif lies at 42-70 (KENNALCPAISIGNECPYKENCKFPHDVE). Residues 160–193 (EEKPDPSSKVSNIPEENRDATSAISEGKETESVS) form a disordered region. FMN is bound by residues 245–247 (PLT) and Q308. C340 serves as the catalytic Proton donor. FMN contacts are provided by residues K380, H411, 460–462 (NGD), and 483–484 (AR).

The protein belongs to the Dus family. Dus3 subfamily. Requires FMN as cofactor.

It is found in the cytoplasm. Its subcellular location is the nucleus. It carries out the reaction 5,6-dihydrouridine(47) in tRNA + NAD(+) = uridine(47) in tRNA + NADH + H(+). It catalyses the reaction 5,6-dihydrouridine(47) in tRNA + NADP(+) = uridine(47) in tRNA + NADPH + H(+). The enzyme catalyses a 5,6-dihydrouridine in mRNA + NAD(+) = a uridine in mRNA + NADH + H(+). The catalysed reaction is a 5,6-dihydrouridine in mRNA + NADP(+) = a uridine in mRNA + NADPH + H(+). In terms of biological role, catalyzes the synthesis of dihydrouridine, a modified base, in various RNAs, such as tRNAs and mRNAs. Modifies the uridine in position 47 (U47) in the D-loop of tRNAs. Also able to mediate formation of dihydrouridine outside of the D-loop of tRNAs. Catalyzes the synthesis of dihydrouridine in some mRNAs, thereby affecting their translation. Dus3-mediated dihydrouridylation of the mRNA encoding alpha-tubulin nda2 is required for meiotic chromosome segregation. The polypeptide is tRNA-dihydrouridine(47) synthase [NAD(P)(+)] (Schizosaccharomyces pombe (strain 972 / ATCC 24843) (Fission yeast)).